The sequence spans 802 residues: Vacuolar membrane protease (802 aa).

The Cytoplasmic segment spans residues Met-1–Pro-13. A helical membrane pass occupies residues Val-14–Leu-34. Residues Thr-35–Thr-357 are Vacuolar-facing. N-linked (GlcNAc...) asparagine glycosylation is found at Asn-48, Asn-102, Asn-105, and Asn-112. The Zn(2+) site is built by His-152 and Asp-164. Residue Glu-198 is the Proton acceptor of the active site. Glu-199, Glu-224, and His-297 together coordinate Zn(2+). Residues Phe-358 to Trp-378 traverse the membrane as a helical segment. Over Ser-379–Phe-389 the chain is Cytoplasmic. The chain crosses the membrane as a helical span at residues Ala-390–Trp-409. Residues Arg-410–Thr-423 are Vacuolar-facing. The helical transmembrane segment at Ser-424–Leu-444 threads the bilayer. Residues His-445–Arg-457 lie on the Cytoplasmic side of the membrane. Residues Met-458–Leu-478 traverse the membrane as a helical segment. Residues Ala-479–Ser-490 are Vacuolar-facing. The chain crosses the membrane as a helical span at residues Leu-491–Ala-511. Residues Pro-512 to Ser-609 are Cytoplasmic-facing. Disordered regions lie at residues Gly-528 to Thr-554 and Ala-570 to Trp-603. Residues Trp-610–Ile-630 traverse the membrane as a helical segment. The Vacuolar segment spans residues Ala-631–Leu-649. Residues Tyr-650 to Ile-670 traverse the membrane as a helical segment. The Cytoplasmic portion of the chain corresponds to His-671–Val-677. Residues Pro-678–Phe-698 traverse the membrane as a helical segment. Over Ser-699 to Arg-802 the chain is Vacuolar. 2 N-linked (GlcNAc...) asparagine glycosylation sites follow: Asn-746 and Asn-779.

The protein belongs to the peptidase M28 family. The cofactor is Zn(2+).

It is found in the vacuole membrane. Functionally, may be involved in vacuolar sorting and osmoregulation. This Leptosphaeria maculans (strain JN3 / isolate v23.1.3 / race Av1-4-5-6-7-8) (Blackleg fungus) protein is Vacuolar membrane protease.